Reading from the N-terminus, the 857-residue chain is DNA mismatch repair protein MutS (857 aa).

608–615 is a binding site for ATP; the sequence is GPNMSGKS.

The protein belongs to the DNA mismatch repair MutS family.

This protein is involved in the repair of mismatches in DNA. It is possible that it carries out the mismatch recognition step. This protein has a weak ATPase activity. The sequence is that of DNA mismatch repair protein MutS from Lactobacillus gasseri (strain ATCC 33323 / DSM 20243 / BCRC 14619 / CIP 102991 / JCM 1131 / KCTC 3163 / NCIMB 11718 / NCTC 13722 / AM63).